A 320-amino-acid chain; its full sequence is Ribosome production factor 2 homolog (320 aa).

One can recognise a Brix domain in the interval 30–234 (RTMLFLDGRK…IRRTKIASED (205 aa)). A disordered region spans residues 268–320 (LGKQQTGSIQTRRVKALRKTPEEKKENRQRKKVALKAAAAEALASQGNNPFSS). Residues 302–311 (LKAAAAEALA) show a composition bias toward low complexity.

The protein belongs to the RPF2 family.

Its subcellular location is the nucleus. The protein localises to the nucleolus. Its function is as follows. Required for normal assembly of the mitotic spindle. May be involved in both centrosome-dependent and centrosome-independent spindle assembly programs. This Drosophila melanogaster (Fruit fly) protein is Ribosome production factor 2 homolog.